The primary structure comprises 176 residues: Large ribosomal subunit protein uL10 (176 aa).

The protein belongs to the universal ribosomal protein uL10 family. As to quaternary structure, part of the ribosomal stalk of the 50S ribosomal subunit. The N-terminus interacts with L11 and the large rRNA to form the base of the stalk. The C-terminus forms an elongated spine to which L12 dimers bind in a sequential fashion forming a multimeric L10(L12)X complex.

Forms part of the ribosomal stalk, playing a central role in the interaction of the ribosome with GTP-bound translation factors. This Hahella chejuensis (strain KCTC 2396) protein is Large ribosomal subunit protein uL10.